The following is a 131-amino-acid chain: Phosphomevalonate dehydratase small subunit (131 aa).

Serine 62 acts as the Proton acceptor in catalysis.

Belongs to the AcnX type II small subunit family. As to quaternary structure, heterodimer composed of a large subunit (PMDh-L) and a small subunit (PMDh-S).

It catalyses the reaction (R)-5-phosphomevalonate = (2E)-3-methyl-5-phosphooxypent-2-enoate + H2O. Its pathway is isoprenoid biosynthesis; isopentenyl diphosphate biosynthesis via mevalonate pathway. Its function is as follows. Component of a hydro-lyase that catalyzes the dehydration of mevalonate 5-phosphate (MVA5P) to form trans-anhydromevalonate 5-phosphate (tAHMP). Involved in the archaeal mevalonate (MVA) pathway, which provides fundamental precursors for isoprenoid biosynthesis, such as isopentenyl diphosphate (IPP) and dimethylallyl diphosphate (DMAPP). The polypeptide is Phosphomevalonate dehydratase small subunit (Thermococcus gammatolerans (strain DSM 15229 / JCM 11827 / EJ3)).